A 262-amino-acid polypeptide reads, in one-letter code: Lysine 5,6-aminomutase beta subunit (262 aa).

The B12-binding domain occupies 120–262; it reads KIVVVGASTG…VKTLNDRMNS (143 aa). Residues 130 to 136 and H133 each bind adenosylcob(III)alamin; that span reads TDAHTVG. K144 carries the N6-(pyridoxal phosphate)lysine modification. Adenosylcob(III)alamin is bound by residues 185–192, 219–223, and 239–244; these read LVSQTVTQ, LCGGP, and FGPGRF.

The protein belongs to the KamE family. Heterotetramer of 2 alpha and 2 beta subunits. Adenosylcob(III)alamin is required as a cofactor. Pyridoxal 5'-phosphate serves as cofactor.

It catalyses the reaction (3S)-3,6-diaminohexanoate = (3S,5S)-3,5-diaminohexanoate. It carries out the reaction D-lysine = (2R,5S)-2,5-diaminohexanoate. Its pathway is amino-acid metabolism; lysine degradation. Rapidly inactivated in the presence of D-lysine and to a lesser extent in the absence of adenosylcobalamin (Adocbl). Activity is stable in the presence of Adocbl when D-lysine is absent. Adocbl imparts thermal stability at 37 degrees Celsius. Functionally, catalyzes the migration of the L-beta-lysine and D-lysine epsilon amino group to the delta carbon to produce 3,5-diaminohexanoate and 2,5-diaminohexanoate, respectively. The sequence is that of Lysine 5,6-aminomutase beta subunit (kamE) from Acetoanaerobium sticklandii (strain ATCC 12662 / DSM 519 / JCM 1433 / CCUG 9281 / NCIMB 10654 / HF) (Clostridium sticklandii).